A 72-amino-acid chain; its full sequence is Putative membrane protein insertion efficiency factor (72 aa).

The protein belongs to the UPF0161 family.

Its subcellular location is the cell inner membrane. In terms of biological role, could be involved in insertion of integral membrane proteins into the membrane. In Amoebophilus asiaticus (strain 5a2), this protein is Putative membrane protein insertion efficiency factor.